The sequence spans 854 residues: Fibronectin-binding protein PlpA (854 aa).

A compositionally biased stretch (low complexity) spans 1 to 24 (MDNNQNNFNQPGQQGFDQYQQQSG). Residues 1–33 (MDNNQNNFNQPGQQGFDQYQQQSGALVSYGYDA) form a disordered region. The tract at residues 91 to 109 (QYNQQQNQGYEQQYDEYGN) is fibronectin-binding. Disordered regions lie at residues 247-327 (YEQE…LEAP), 411-434 (SSNN…EDSN), 743-766 (TINP…QLPP), and 835-854 (IQPS…YNNR). Over residues 258-267 (EPAHEQDLRE) the composition is skewed to basic and acidic residues. 2 stretches are compositionally biased toward polar residues: residues 311-320 (TVNQPDQTPI) and 411-428 (SSNN…TSNE). Residues 384 to 622 (NLEEIQKVKL…SSFQKALSEV (239 aa)) are a coiled coil. The span at 746–764 (PPQPQPQALPQPHPQPQQL) shows a compositional bias: pro residues.

Its subcellular location is the cell membrane. Its function is as follows. Binds immobilized fibronectin, specifically the gelatin/heparin-binding domain. This is Fibronectin-binding protein PlpA (plpA) from Mycoplasmoides gallisepticum (strain R(low / passage 15 / clone 2)) (Mycoplasma gallisepticum).